Reading from the N-terminus, the 389-residue chain is Serpin B13 (389 aa).

This sequence belongs to the serpin family. Ov-serpin subfamily.

It is found in the cytoplasm. Functionally, may play a role in the proliferation or differentiation of keratinocytes. The protein is Serpin B13 (Serpinb13) of Mus musculus (Mouse).